Consider the following 105-residue polypeptide: Replication initiation control protein YabA (105 aa).

His79, Cys81, Cys95, and Cys98 together coordinate Zn(2+).

The protein belongs to the YabA family. As to quaternary structure, homotetramer. Interacts with both DnaA and DnaN, acting as a bridge between these two proteins. Zn(2+) serves as cofactor.

It is found in the cytoplasm. The protein resides in the nucleoid. Involved in control of chromosome replication initiation. Inhibits the cooperative binding of DnaA to the oriC region, thus negatively regulating initiation of chromosome replication. Inhibits the ability of DnaA-ATP to form a helix on DNA; does not disassemble preformed DnaA-DNA helices. Decreases the residence time of DnaA on the chromosome at its binding sites (oriC, replication forks and promoter-binding sites). Tethers DnaA to the replication machinery via the DNA polymerase beta sliding clamp subunit (dnaN). Associates with oriC and other DnaA targets on the chromosome in a DnaA-dependent manner. This chain is Replication initiation control protein YabA, found in Streptococcus sanguinis (strain SK36).